The chain runs to 87 residues: Pyocin-S1 immunity protein (87 aa).

Belongs to the colicins ColE2/ColE8/ColE9 and pyocins S1/S2 family.

The protein is Pyocin-S1 immunity protein (imm1) of Pseudomonas aeruginosa.